Here is a 318-residue protein sequence, read N- to C-terminus: Nuclear egress protein 1 (318 aa).

The CCCH-type zinc finger occupies 129 to 239 (CLRLSPFGHS…HLLLQGTSLH (111 aa)).

Belongs to the herpesviridae NEC1 protein family. As to quaternary structure, forms a heterodimeric viral nuclear egress complex (NEC) with NEC2. Interacts with capsid vertex specific component 2/CVC2; this interaction directs the capsid to the host inner nuclear membrane to initiate budding. In terms of processing, phosphorylated at serine residues in the N-terminus. This phosphorylation regulates the localization within the inner nuclear membrane.

The protein localises to the host nucleus inner membrane. Plays an essential role in virion nuclear egress, the first step of virion release from infected cell. Within the host nucleus, NEC1 interacts with the newly formed capsid through the vertexes and directs it to the inner nuclear membrane by associating with NEC2. Induces the budding of the capsid at the inner nuclear membrane as well as its envelopment into the perinuclear space. There, the NEC1/NEC2 complex promotes the fusion of the enveloped capsid with the outer nuclear membrane and the subsequent release of the viral capsid into the cytoplasm where it will reach the secondary budding sites in the host Golgi or trans-Golgi network. The chain is Nuclear egress protein 1 from Homo sapiens (Human).